The sequence spans 200 residues: 3-isopropylmalate dehydratase small subunit (200 aa).

It belongs to the LeuD family. LeuD type 1 subfamily. As to quaternary structure, heterodimer of LeuC and LeuD.

The catalysed reaction is (2R,3S)-3-isopropylmalate = (2S)-2-isopropylmalate. The protein operates within amino-acid biosynthesis; L-leucine biosynthesis; L-leucine from 3-methyl-2-oxobutanoate: step 2/4. Catalyzes the isomerization between 2-isopropylmalate and 3-isopropylmalate, via the formation of 2-isopropylmaleate. The protein is 3-isopropylmalate dehydratase small subunit of Actinobacillus pleuropneumoniae serotype 5b (strain L20).